The primary structure comprises 143 residues: Nucleoside diphosphate kinase (143 aa).

ATP-binding residues include lysine 11, phenylalanine 59, arginine 87, threonine 93, arginine 104, and asparagine 114. Histidine 117 serves as the catalytic Pros-phosphohistidine intermediate.

This sequence belongs to the NDK family. In terms of assembly, homotetramer. Requires Mg(2+) as cofactor.

The protein localises to the cytoplasm. It carries out the reaction a 2'-deoxyribonucleoside 5'-diphosphate + ATP = a 2'-deoxyribonucleoside 5'-triphosphate + ADP. The catalysed reaction is a ribonucleoside 5'-diphosphate + ATP = a ribonucleoside 5'-triphosphate + ADP. Functionally, major role in the synthesis of nucleoside triphosphates other than ATP. The ATP gamma phosphate is transferred to the NDP beta phosphate via a ping-pong mechanism, using a phosphorylated active-site intermediate. This Shewanella frigidimarina (strain NCIMB 400) protein is Nucleoside diphosphate kinase.